The following is a 217-amino-acid chain: Adenylate kinase (217 aa).

10 to 15 (GAGKGT) provides a ligand contact to ATP. An NMP region spans residues 30–59 (STGDMLRAAIREGTELGLKAKSVMESGGLV). AMP-binding positions include Thr-31, Arg-36, 57–59 (GLV), 85–88 (GFPR), and Gln-92. Residues 122-159 (GRRQHPASGRVYHVVYNPPKVEGKDDETGEDLVQRPDD) are LID. Residues Arg-123 and 132 to 133 (VY) each bind ATP. 2 residues coordinate AMP: Arg-156 and Arg-167. Arg-202 is a binding site for ATP.

The protein belongs to the adenylate kinase family. As to quaternary structure, monomer.

The protein localises to the cytoplasm. The enzyme catalyses AMP + ATP = 2 ADP. It functions in the pathway purine metabolism; AMP biosynthesis via salvage pathway; AMP from ADP: step 1/1. Functionally, catalyzes the reversible transfer of the terminal phosphate group between ATP and AMP. Plays an important role in cellular energy homeostasis and in adenine nucleotide metabolism. This is Adenylate kinase from Acinetobacter baumannii (strain AB307-0294).